Consider the following 407-residue polypeptide: Argininosuccinate synthase (407 aa).

ATP-binding positions include 16-24 (AYSGGLDTS) and A44. 2 residues coordinate L-citrulline: Y96 and S101. ATP is bound at residue G126. Positions 128, 132, and 133 each coordinate L-aspartate. Residue N132 participates in L-citrulline binding. Positions 136, 185, 194, 270, and 282 each coordinate L-citrulline.

It belongs to the argininosuccinate synthase family. Type 1 subfamily. Homotetramer.

Its subcellular location is the cytoplasm. The enzyme catalyses L-citrulline + L-aspartate + ATP = 2-(N(omega)-L-arginino)succinate + AMP + diphosphate + H(+). The protein operates within amino-acid biosynthesis; L-arginine biosynthesis; L-arginine from L-ornithine and carbamoyl phosphate: step 2/3. The chain is Argininosuccinate synthase from Shewanella sp. (strain W3-18-1).